The following is a 97-amino-acid chain: Cysteine-rich and transmembrane domain-containing protein 1 (97 aa).

Residues 1–40 show a composition bias toward pro residues; it reads MNQENPPPYPGPGPTAPYPPYPPQPMGPGPMGGPYPPPQG. The segment at 1 to 61 is disordered; sequence MNQENPPPYP…QGGPQEPPKT (61 aa). Over residues 41-50 the composition is skewed to low complexity; sequence YPYQGYPQYG. The chain crosses the membrane as a helical span at residues 74–91; that stretch reads LGPSTCLTACWTALCCCC.

This sequence belongs to the CYSTM1 family.

Its subcellular location is the membrane. The chain is Cysteine-rich and transmembrane domain-containing protein 1 (CYSTM1) from Homo sapiens (Human).